Consider the following 322-residue polypeptide: Solute carrier family 35 member B1 (322 aa).

The next 8 membrane-spanning stretches (helical) occupy residues 12-32, 51-71, 85-105, 136-156, 168-188, 210-230, 243-263, and 285-305; these read LRLPLCFLGVFVCYFYYGILQ, FALTLVFIQCVINAMFAKILI, WLYAACSVSYVGAMVSSNSAL, YPLAKYLCVLLIVAGVALFMY, TVGFGELLLLMSLTLDGLTGV, LWSTFLLGAGILFTGELWEFL, ILLFGLTSALGQSFIFMTVVY, and VILFANPISSMQWVGTVLVFL. The short motif at 318 to 322 is the Di-lysine motif element; it reads KKTSH.

Belongs to the nucleotide-sugar transporter family. SLC35B subfamily.

It localises to the endoplasmic reticulum membrane. It catalyses the reaction ADP(in) + ATP(out) = ADP(out) + ATP(in). The enzyme catalyses UDP(out) + ATP(in) = UDP(in) + ATP(out). The catalysed reaction is UTP(out) + ATP(in) = UTP(in) + ATP(out). It carries out the reaction dATP(out) + ATP(in) = dATP(in) + ATP(out). ATP:ADP antiporter that catalyzes the exchange of ATP and ADP across the endoplasmic reticulum (ER) membrane. Imports ATP from the cytosol to the ER lumen and exports ADP in the opposite direction. Regulates ER energy metabolism and protein biogenesis. Appears to be part of a calcium-dependent ER to cytosol low energy response axis, where calcium efflux from ER to the cytosol triggers ATP import into the ER lumen to maintain sufficient ATP supply. Provides ATP to ER chaperone HSPA5 that drives protein folding and trafficking in the ER. Can transport dATP, UTP or UDP in exchange for ATP, but the physiological relevance of this process remains to be established. This Mus musculus (Mouse) protein is Solute carrier family 35 member B1 (Slc35b1).